The chain runs to 146 residues: Putative pre-16S rRNA nuclease (146 aa).

Belongs to the YqgF nuclease family.

The protein resides in the cytoplasm. Could be a nuclease involved in processing of the 5'-end of pre-16S rRNA. The polypeptide is Putative pre-16S rRNA nuclease (Paraburkholderia phytofirmans (strain DSM 17436 / LMG 22146 / PsJN) (Burkholderia phytofirmans)).